Consider the following 87-residue polypeptide: U24 protein (87 aa).

Phosphothreonine is present on Thr-6. The short motif at 8–11 is the PPXY motif element; that stretch reads PPSY. A helical membrane pass occupies residues 59–79; it reads FLVLTGLAIAMILFIVFVLYV.

As to quaternary structure, interacts with host ITCH; this interaction probably mediates ITCH degradation. Interacts probably with NEDD4.

It is found in the membrane. In terms of biological role, down-regulates the TCR/CD3E complex and the transferrin receptor TFRC in host T-cells by blocking them from recycling back to the cell surface. This is U24 protein (U24) from Homo sapiens (Human).